Here is a 130-residue protein sequence, read N- to C-terminus: Small ribosomal subunit protein eS8 (130 aa).

This sequence belongs to the eukaryotic ribosomal protein eS8 family. Part of the 30S ribosomal subunit.

In Thermococcus onnurineus (strain NA1), this protein is Small ribosomal subunit protein eS8.